Here is a 107-residue protein sequence, read N- to C-terminus: Replication restart protein PriB (107 aa).

An SSB domain is found at 8-107 (IENRLSLIGV…LHAEHIELLD (100 aa)).

Belongs to the PriB family. Homodimer. Interacts with PriA and DnaT. Component of the replication restart primosome. Primosome assembly occurs via a 'hand-off' mechanism. PriA binds to replication forks, subsequently PriB then DnaT bind; DnaT then displaces ssDNA to generate the helicase loading substrate.

In terms of biological role, involved in the restart of stalled replication forks, which reloads the replicative helicase on sites other than the origin of replication; the PriA-PriB pathway is the major replication restart pathway. During primosome assembly it facilitates complex formation between PriA and DnaT on DNA; stabilizes PriA on DNA. Stimulates the DNA unwinding activity of PriA helicase. The chain is Replication restart protein PriB from Actinobacillus succinogenes (strain ATCC 55618 / DSM 22257 / CCUG 43843 / 130Z).